The primary structure comprises 90 residues: uncharacterized protein (90 aa).

The helical transmembrane segment at 32-52 threads the bilayer; it reads IIINLIPLVLLFAFFCPCIYF.

The protein localises to the membrane. This is an uncharacterized protein from Schizosaccharomyces pombe (strain 972 / ATCC 24843) (Fission yeast).